The sequence spans 509 residues: Photosystem II CP47 reaction center protein (509 aa).

The next 6 helical transmembrane spans lie at 21–36, 101–115, 140–156, 203–218, 237–252, and 457–472; these read AVHL…WAGS, IVLS…IWHW, GIHL…FGAF, IAAG…FHLT, VLSS…AFIT, and NFAL…HGSR.

This sequence belongs to the PsbB/PsbC family. PsbB subfamily. In terms of assembly, PSII is composed of 1 copy each of membrane proteins PsbA, PsbB, PsbC, PsbD, PsbE, PsbF, PsbH, PsbI, PsbJ, PsbK, PsbL, PsbM, PsbT, PsbX, PsbY, PsbZ, Psb30/Ycf12, at least 3 peripheral proteins of the oxygen-evolving complex and a large number of cofactors. It forms dimeric complexes. Binds multiple chlorophylls. PSII binds additional chlorophylls, carotenoids and specific lipids. is required as a cofactor.

It localises to the plastid. The protein resides in the chloroplast thylakoid membrane. In terms of biological role, one of the components of the core complex of photosystem II (PSII). It binds chlorophyll and helps catalyze the primary light-induced photochemical processes of PSII. PSII is a light-driven water:plastoquinone oxidoreductase, using light energy to abstract electrons from H(2)O, generating O(2) and a proton gradient subsequently used for ATP formation. This is Photosystem II CP47 reaction center protein from Porphyra purpurea (Red seaweed).